A 105-amino-acid polypeptide reads, in one-letter code: Nucleoid-associated protein MW0434 (105 aa).

Positions 1 to 33 (MRGGGNMQQMMKQMQKMQKKMAQEQEKLKEERI) are disordered. The span at 7–16 (MQQMMKQMQK) shows a compositional bias: low complexity. Residues 21–33 (MAQEQEKLKEERI) show a composition bias toward basic and acidic residues.

This sequence belongs to the YbaB/EbfC family. As to quaternary structure, homodimer.

The protein localises to the cytoplasm. It localises to the nucleoid. Binds to DNA and alters its conformation. May be involved in regulation of gene expression, nucleoid organization and DNA protection. In Staphylococcus aureus (strain MW2), this protein is Nucleoid-associated protein MW0434.